Consider the following 944-residue polypeptide: LPS-assembly protein LptD (944 aa).

The signal sequence occupies residues 1-33 (MALKSPAFRRKFPLLVTGGLLALQPLATSFVVA). The interval 52-102 (KATGNLPPRPVHPGAAAASSGAEAPGEVGEAQAEKPMLVTESKGRGLKSRS) is disordered. Residues 64–82 (PGAAAASSGAEAPGEVGEA) show a composition bias toward low complexity.

It belongs to the LptD family. In terms of assembly, component of the lipopolysaccharide transport and assembly complex. Interacts with LptE and LptA.

It is found in the cell outer membrane. Functionally, together with LptE, is involved in the assembly of lipopolysaccharide (LPS) at the surface of the outer membrane. The sequence is that of LPS-assembly protein LptD from Pseudomonas entomophila (strain L48).